We begin with the raw amino-acid sequence, 225 residues long: Helicostatins (225 aa).

The first 18 residues, 1-18 (MLYSSLPVCFLVLGAALC), serve as a signal peptide directing secretion. Residues 19 to 48 (APERMQNEAEPHDLQPHEAEPHSDHVAPLA) constitute a propeptide that is removed on maturation. 3 positions are modified to leucine amide: Leu-58, Leu-79, and Leu-90. Positions 94 to 127 (SVDEDQSNDEQQLTTSDLDQAALAELFDQYDDAE) are excised as a propeptide. Leu-137 is modified (leucine amide). Residues 141–149 (FADDETSEE) constitute a propeptide that is removed on maturation. Leucine amide occurs at positions 159, 170, 181, 192, and 206. A disordered region spans residues 205 to 225 (GLGKRSGDDVSADDSDNYFDV). A propeptide spanning residues 210-225 (SGDDVSADDSDNYFDV) is cleaved from the precursor. A compositionally biased stretch (acidic residues) spans 214–225 (VSADDSDNYFDV).

It belongs to the allatostatin family. Highly expressed in the CNS and gut of larvae. Also expressed in the cells of the larval brain and ventral nerve cord and in endocrine cells of the midgut.

It localises to the secreted. May act as a neurotransmitter or neuromodulator. In Helicoverpa armigera (Cotton bollworm), this protein is Helicostatins.